The following is a 604-amino-acid chain: UvrABC system protein C (604 aa).

The 79-residue stretch at 17–95 (AQPGVYRMLN…IKSLAPRYNI (79 aa)) folds into the GIY-YIG domain. The UVR domain maps to 204–239 (DEVLKTIEQKMFTASDQQDYEQAAQLRDQMQALRKI).

It belongs to the UvrC family. Interacts with UvrB in an incision complex.

The protein localises to the cytoplasm. Its function is as follows. The UvrABC repair system catalyzes the recognition and processing of DNA lesions. UvrC both incises the 5' and 3' sides of the lesion. The N-terminal half is responsible for the 3' incision and the C-terminal half is responsible for the 5' incision. This Nitrosomonas europaea (strain ATCC 19718 / CIP 103999 / KCTC 2705 / NBRC 14298) protein is UvrABC system protein C.